The chain runs to 216 residues: Octanoyltransferase (216 aa).

A BPL/LPL catalytic domain is found at 32–207 (PDSQDEIWLV…QLVKHLDYAE (176 aa)). Substrate-binding positions include 71–78 (RGGQVTYH), 138–140 (SLG), and 151–153 (GLA). Cys169 acts as the Acyl-thioester intermediate in catalysis.

The protein belongs to the LipB family.

The protein localises to the cytoplasm. It carries out the reaction octanoyl-[ACP] + L-lysyl-[protein] = N(6)-octanoyl-L-lysyl-[protein] + holo-[ACP] + H(+). Its pathway is protein modification; protein lipoylation via endogenous pathway; protein N(6)-(lipoyl)lysine from octanoyl-[acyl-carrier-protein]: step 1/2. In terms of biological role, catalyzes the transfer of endogenously produced octanoic acid from octanoyl-acyl-carrier-protein onto the lipoyl domains of lipoate-dependent enzymes. Lipoyl-ACP can also act as a substrate although octanoyl-ACP is likely to be the physiological substrate. The sequence is that of Octanoyltransferase from Pseudomonas putida (strain ATCC 47054 / DSM 6125 / CFBP 8728 / NCIMB 11950 / KT2440).